Reading from the N-terminus, the 390-residue chain is Digeranylgeranylglycerophospholipid reductase (390 aa).

FAD contacts are provided by alanine 18, glutamate 37, cysteine 48, alanine 49, alanine 51, arginine 98, valine 122, aspartate 278, glycine 290, and isoleucine 291. Valine 368 serves as a coordination point for a 2,3-bis-O-(geranylgeranyl)-sn-glycerol 1-phospholipid.

The protein belongs to the geranylgeranyl reductase family. DGGGPL reductase subfamily. FAD serves as cofactor.

The enzyme catalyses a 2,3-bis-O-phytanyl-sn-glycerol 1-phospholipid + 8 A = a 2,3-bis-O-(geranylgeranyl)-sn-glycerol 1-phospholipid + 8 AH2. It catalyses the reaction 2,3-bis-O-(phytanyl)-sn-glycerol 1-phosphate + 8 A = 2,3-bis-O-(geranylgeranyl)-sn-glycerol 1-phosphate + 8 AH2. The catalysed reaction is CDP-2,3-bis-O-(geranylgeranyl)-sn-glycerol + 8 AH2 = CDP-2,3-bis-O-(phytanyl)-sn-glycerol + 8 A. It carries out the reaction archaetidylserine + 8 AH2 = 2,3-bis-O-phytanyl-sn-glycero-3-phospho-L-serine + 8 A. It participates in membrane lipid metabolism; glycerophospholipid metabolism. In terms of biological role, is involved in the reduction of 2,3-digeranylgeranylglycerophospholipids (unsaturated archaeols) into 2,3-diphytanylglycerophospholipids (saturated archaeols) in the biosynthesis of archaeal membrane lipids. Catalyzes the formation of archaetidic acid (2,3-di-O-phytanyl-sn-glyceryl phosphate) from 2,3-di-O-geranylgeranylglyceryl phosphate (DGGGP) via the hydrogenation of each double bond of the isoprenoid chains. Is also probably able to reduce double bonds of geranyl groups in CDP-2,3-bis-O-(geranylgeranyl)-sn-glycerol and archaetidylserine, thus acting at various stages in the biosynthesis of archaeal membrane lipids. This Methanococcus vannielii (strain ATCC 35089 / DSM 1224 / JCM 13029 / OCM 148 / SB) protein is Digeranylgeranylglycerophospholipid reductase.